Here is a 214-residue protein sequence, read N- to C-terminus: Proteasome subunit beta type-6 (214 aa).

Positions 1–14 (MEAPEWLDNAVDLG) are cleaved as a propeptide — removed in mature form. Threonine 15 serves as the catalytic Nucleophile.

This sequence belongs to the peptidase T1B family. As to quaternary structure, the 26S proteasome consists of a 20S proteasome core and two 19S regulatory subunits. The 20S proteasome core is composed of 28 subunits that are arranged in four stacked rings, resulting in a barrel-shaped structure. The two end rings are each formed by seven alpha subunits, and the two central rings are each formed by seven beta subunits. The catalytic chamber with the active sites is on the inside of the barrel.

The protein localises to the cytoplasm. Its subcellular location is the nucleus. It carries out the reaction Cleavage of peptide bonds with very broad specificity.. In terms of biological role, the proteasome is a multicatalytic proteinase complex which is characterized by its ability to cleave peptides with Arg, Phe, Tyr, Leu, and Glu adjacent to the leaving group at neutral or slightly basic pH. The proteasome has an ATP-dependent proteolytic activity. This Dictyostelium discoideum (Social amoeba) protein is Proteasome subunit beta type-6 (psmB6).